Reading from the N-terminus, the 420-residue chain is Putative zinc metalloprotease Lmo1318 (420 aa).

Histidine 18 is a Zn(2+) binding site. Residue glutamate 19 is part of the active site. Residue histidine 22 coordinates Zn(2+). 4 helical membrane-spanning segments follow: residues 172 to 194 (TIFA…LAFV), 304 to 326 (NWIV…LDML), 347 to 369 (VLNW…LPAL), and 393 to 412 (GIIH…LVTW). Residues 176 to 267 (GPLFNFILAI…DGKTQDIDVK (92 aa)) enclose the PDZ domain.

This sequence belongs to the peptidase M50B family. Zn(2+) is required as a cofactor.

It localises to the cell membrane. The sequence is that of Putative zinc metalloprotease Lmo1318 from Listeria monocytogenes serovar 1/2a (strain ATCC BAA-679 / EGD-e).